A 183-amino-acid chain; its full sequence is Peptidyl-prolyl cis-trans isomerase 11 (183 aa).

The PPIase cyclophilin-type domain occupies 20-182; sequence FLEVTAGGAP…LPIVVVQCGQ (163 aa).

Belongs to the cyclophilin-type PPIase family. PPIase H subfamily.

The enzyme catalyses [protein]-peptidylproline (omega=180) = [protein]-peptidylproline (omega=0). In terms of biological role, PPIases accelerate the folding of proteins. It catalyzes the cis-trans isomerization of proline imidic peptide bonds in oligopeptides. This is Peptidyl-prolyl cis-trans isomerase 11 (cyn-11) from Caenorhabditis elegans.